Here is a 150-residue protein sequence, read N- to C-terminus: Large ribosomal subunit protein uL15 (150 aa).

Belongs to the universal ribosomal protein uL15 family. As to quaternary structure, part of the 50S ribosomal subunit.

Binds to the 23S rRNA. This Anaplasma marginale (strain Florida) protein is Large ribosomal subunit protein uL15.